A 427-amino-acid chain; its full sequence is 3-phosphoshikimate 1-carboxyvinyltransferase (427 aa).

The 3-phosphoshikimate site is built by K20, S21, and R25. K20 serves as a coordination point for phosphoenolpyruvate. Residues G90 and R118 each coordinate phosphoenolpyruvate. 3-phosphoshikimate is bound by residues S163, S164, Q165, S191, D309, and K336. A phosphoenolpyruvate-binding site is contributed by Q165. D309 acts as the Proton acceptor in catalysis. The phosphoenolpyruvate site is built by R340 and R381.

It belongs to the EPSP synthase family. In terms of assembly, monomer.

It is found in the cytoplasm. It catalyses the reaction 3-phosphoshikimate + phosphoenolpyruvate = 5-O-(1-carboxyvinyl)-3-phosphoshikimate + phosphate. Its pathway is metabolic intermediate biosynthesis; chorismate biosynthesis. Catalyzes the transfer of the enolpyruvyl moiety of phosphoenolpyruvate (PEP) to the 5-hydroxyl of shikimate-3-phosphate (S3P) to produce enolpyruvyl shikimate-3-phosphate and inorganic phosphate. The protein is 3-phosphoshikimate 1-carboxyvinyltransferase of Methanococcoides burtonii (strain DSM 6242 / NBRC 107633 / OCM 468 / ACE-M).